Reading from the N-terminus, the 193-residue chain is MKSSAQLCMEARNYNFNAAAPLRLYLATCVRLVEEAQAAAQADDVARAYMLYVRYLDLCMHQLSGHREVQQPVTDAERLSRDEYEQLLRLEVPAVLRLTEELKSAVDLRHERGRASLARSVVPEAGRGEHSRQEVQLPPSFDEERFNRTVQWFLAAGRSMSLPVSAEEPAVREVFSYPELPKLSMAAESWAPS.

This sequence belongs to the RFU1 family.

Its subcellular location is the endosome. Its function is as follows. Inhibitor of the DOA4 deubiquitinase involved in the regulation of protein degradation by the proteasome and maintenance of a normal level of free ubiquitin. This is Regulator of free ubiquitin chains 1 (RFU1) from Eremothecium gossypii (strain ATCC 10895 / CBS 109.51 / FGSC 9923 / NRRL Y-1056) (Yeast).